Reading from the N-terminus, the 148-residue chain is Large ribosomal subunit protein uL15 (148 aa).

The segment at 1–51 (MNLSNLKPAEGSTKTRKRIGRGPGSGLGGTSTRGHKGAKSRSGYKNKIGFE) is disordered. Residues 21 to 31 (RGPGSGLGGTS) show a composition bias toward gly residues. Residues 33 to 44 (RGHKGAKSRSGY) show a composition bias toward basic residues.

This sequence belongs to the universal ribosomal protein uL15 family. As to quaternary structure, part of the 50S ribosomal subunit.

Its function is as follows. Binds to the 23S rRNA. The chain is Large ribosomal subunit protein uL15 from Parabacteroides distasonis (strain ATCC 8503 / DSM 20701 / CIP 104284 / JCM 5825 / NCTC 11152).